The following is a 348-amino-acid chain: Autophagy-related protein 27 (348 aa).

A signal peptide spans 1-20; the sequence is MYRPDLLAFLLPLLAAPVFS. Residues 21–274 are Lumenal-facing; the sequence is AETLDCGKIR…DDGGDNSSSH (254 aa). Positions 24–255 constitute an MRH domain; sequence LDCGKIRADG…TWHTKYACEK (232 aa). 3 cysteine pairs are disulfide-bonded: C26–C69, C82–C89, and C175–C253. N-linked (GlcNAc...) asparagine glycans are attached at residues N61 and N84. Basic and acidic residues predominate over residues 180 to 208; that stretch reads EGTEGEWVSEEKYEKRADEKKDDDKKEDG. Positions 180-219 are disordered; the sequence is EGTEGEWVSEEKYEKRADEKKDDDKKEDGGDKDEGESTLE. N-linked (GlcNAc...) asparagine glycosylation is found at N226 and N270. A helical membrane pass occupies residues 275–295; it reads WGFFTWFVLIAFLLIAGYLIF. Residues 296 to 348 are Cytoplasmic-facing; it reads SSWINFTRYGARGWDLLPHSDTIRDIPYLLKDFIRRILNTVQGTGSRGGYSAV.

This sequence belongs to the ATG27 family. In terms of assembly, forms a complex with ATG9 and ATG23.

It is found in the cytoplasmic vesicle membrane. Its subcellular location is the golgi apparatus membrane. The protein localises to the mitochondrion membrane. The protein resides in the preautophagosomal structure membrane. Functionally, effector of VPS34 phosphatidylinositol 3-phosphate kinase signaling. Regulates the cytoplasm to vacuole transport (Cvt) vesicle formation. Plays a role in ATG protein retrieval from the pre-autophagosomal structure (PAS) and is especially required for autophagy-dependent cycling of ATG9. Autophagy is required for proper vegetative growth, asexual/sexual reproduction, and full virulence. Autophagy is particularly involved in the biosynthesis of deoxynivalenol (DON), an important virulence determinant. This Gibberella zeae (strain ATCC MYA-4620 / CBS 123657 / FGSC 9075 / NRRL 31084 / PH-1) (Wheat head blight fungus) protein is Autophagy-related protein 27.